Reading from the N-terminus, the 181-residue chain is Large ribosomal subunit protein uL5 (181 aa).

This sequence belongs to the universal ribosomal protein uL5 family. As to quaternary structure, part of the 50S ribosomal subunit; part of the 5S rRNA/L5/L18/L25 subcomplex. Contacts the 5S rRNA and the P site tRNA. Forms a bridge to the 30S subunit in the 70S ribosome.

Functionally, this is one of the proteins that bind and probably mediate the attachment of the 5S RNA into the large ribosomal subunit, where it forms part of the central protuberance. In the 70S ribosome it contacts protein S13 of the 30S subunit (bridge B1b), connecting the 2 subunits; this bridge is implicated in subunit movement. Contacts the P site tRNA; the 5S rRNA and some of its associated proteins might help stabilize positioning of ribosome-bound tRNAs. The sequence is that of Large ribosomal subunit protein uL5 from Aster yellows witches'-broom phytoplasma (strain AYWB).